Reading from the N-terminus, the 501-residue chain is Type B diterpene cyclase (501 aa).

The protein belongs to the terpene synthase family. Monomer. It depends on Mg(2+) as a cofactor.

The catalysed reaction is geranylgeranyl diphosphate = tuberculosinyl diphosphate. With respect to regulation, strongly inhibited by 15-aza-dihydrogeranylgeraniol and 5-isopropyl-N,N,N,2-tetramethyl-4-(piperidine-1-carbonyloxy)benzenaminium chloride (Amo-1618). Inhibited by GGPP concentrations higher than 50 uM. In terms of biological role, catalyzes the formation of tuberculosinyl diphosphate from geranylgeranyl diphosphate (GGPP). It could also react with (14R/S)-14,15-oxidoGGPP to generate 3alpha- and 3beta-hydroxytuberculosinyl diphosphate. The polypeptide is Type B diterpene cyclase (Mycobacterium tuberculosis (strain ATCC 25618 / H37Rv)).